Consider the following 425-residue polypeptide: Nuclear pore complex-interacting protein family member B6 (425 aa).

The segment at 332 to 414 (SPLPPSVDDN…RRLSKLRTRH (83 aa)) is disordered. Residues 353-395 (EVEKPPKPKRWRVDEVEQSPKPKRRRVDEVEQSPKPKRQREAE) show a composition bias toward basic and acidic residues. Over residues 401–414 (KPKRRRLSKLRTRH) the composition is skewed to basic residues.

It belongs to the NPIP family.

This Homo sapiens (Human) protein is Nuclear pore complex-interacting protein family member B6 (NPIPB6).